Here is a 345-residue protein sequence, read N- to C-terminus: MNLQEKIEDLRKRTLSDLLSVADEKTLNNLRTVMLGKKGELTEILKGMKDLTNEERPVIGALANAFRDEFGAKFEAKKLEIEQAVMNAALESESLDVTLPGKAQKKGSRHILTQTQEEIEEIFLGMGYEIVDGYEVETDHYNFERMNLPKDHPARDMQDTFYITNEVLLRTHTSPMQARTMDAHDFSKGGLRMIAPGRVYRRDTDDATHSHQFHQIEGLVVDKNITMADLKGTLDLVMKKMFGQERELRWRPSYFPFTEPSVEVDISCFKCGGKGCNVCKHTGWIEILGAGMVHPNVLEMSGLDSSVYSGFAFGLGQERIAMLRYGINDIRGFYQGDVRFLEQFD.

Glu259 provides a ligand contact to Mg(2+).

It belongs to the class-II aminoacyl-tRNA synthetase family. Phe-tRNA synthetase alpha subunit type 1 subfamily. Tetramer of two alpha and two beta subunits. The cofactor is Mg(2+).

The protein resides in the cytoplasm. The catalysed reaction is tRNA(Phe) + L-phenylalanine + ATP = L-phenylalanyl-tRNA(Phe) + AMP + diphosphate + H(+). The polypeptide is Phenylalanine--tRNA ligase alpha subunit (Lactococcus lactis subsp. cremoris (strain SK11)).